Consider the following 279-residue polypeptide: Shikimate dehydrogenase (NADP(+)) (279 aa).

Shikimate-binding positions include 14 to 16 (SLS) and threonine 62. Catalysis depends on lysine 66, which acts as the Proton acceptor. Residues asparagine 87 and aspartate 103 each coordinate shikimate. NADP(+) is bound by residues 127–131 (GAGGA), 151–156 (NRTKAK), and methionine 215. Tyrosine 217 contributes to the shikimate binding site. Glycine 239 lines the NADP(+) pocket.

Belongs to the shikimate dehydrogenase family. In terms of assembly, homodimer.

The catalysed reaction is shikimate + NADP(+) = 3-dehydroshikimate + NADPH + H(+). It participates in metabolic intermediate biosynthesis; chorismate biosynthesis; chorismate from D-erythrose 4-phosphate and phosphoenolpyruvate: step 4/7. In terms of biological role, involved in the biosynthesis of the chorismate, which leads to the biosynthesis of aromatic amino acids. Catalyzes the reversible NADPH linked reduction of 3-dehydroshikimate (DHSA) to yield shikimate (SA). The sequence is that of Shikimate dehydrogenase (NADP(+)) from Alteromonas mediterranea (strain DSM 17117 / CIP 110805 / LMG 28347 / Deep ecotype).